The following is a 295-amino-acid chain: Accessory protein VasW (295 aa).

Its function is as follows. Plays an accessory role in VasX-mediated bacterial killing. The polypeptide is Accessory protein VasW (Vibrio cholerae serotype O1 (strain ATCC 39315 / El Tor Inaba N16961)).